The sequence spans 510 residues: ATP-dependent zinc metalloprotease FtsH 2 (510 aa).

Topologically, residues 1-4 (MKKN) are cytoplasmic. Residues 5-25 (LHIIILALSIFINLLFIYIFI) traverse the membrane as a helical segment. Topologically, residues 26 to 31 (SEVKPN) are extracellular. The chain crosses the membrane as a helical span at residues 32–52 (LNLNLSFILTAAVIVVTYLLF). Residues 53 to 510 (KNKFSELMPV…LWEEENTLCV (458 aa)) are Cytoplasmic-facing. 124 to 131 (GPPGTGKT) is a binding site for ATP. Zn(2+) is bound at residue His-343. Glu-344 is a catalytic residue. Residues His-347 and Asp-418 each contribute to the Zn(2+) site.

It in the central section; belongs to the AAA ATPase family. This sequence in the C-terminal section; belongs to the peptidase M41 family. Homohexamer. Zn(2+) is required as a cofactor.

Its subcellular location is the cell membrane. Functionally, acts as a processive, ATP-dependent zinc metallopeptidase for both cytoplasmic and membrane proteins. Plays a role in the quality control of integral membrane proteins. The chain is ATP-dependent zinc metalloprotease FtsH 2 from Thermoanaerobacter sp. (strain X514).